Reading from the N-terminus, the 96-residue chain is MSSGGLLLLLGLLTLWAELTPISGQDRPKFCHLPVDSGICRAHIPRFYYNPASNQCQGFIYGGCEGNANNFETRDQCRHTCGASGKEGPRPRIASN.

The first 24 residues, 1 to 24 (MSSGGLLLLLGLLTLWAELTPISG), serve as a signal peptide directing secretion. Q25 is modified (pyrrolidone carboxylic acid). A BPTI/Kunitz inhibitor domain is found at 31–81 (CHLPVDSGICRAHIPRFYYNPASNQCQGFIYGGCEGNANNFETRDQCRHTC). 3 cysteine pairs are disulfide-bonded: C31–C81, C40–C64, and C56–C77.

Belongs to the venom Kunitz-type family. In terms of tissue distribution, expressed by the venom gland.

The protein resides in the secreted. In terms of biological role, serine protease inhibitor. This Daboia russelii (Russel's viper) protein is Kunitz-type serine protease inhibitor 5.